Here is a 314-residue protein sequence, read N- to C-terminus: tRNA-cytidine(32) 2-sulfurtransferase (314 aa).

Residues 49-54 (SGGKDS) carry the PP-loop motif motif. [4Fe-4S] cluster contacts are provided by cysteine 124, cysteine 127, and cysteine 215.

The protein belongs to the TtcA family. In terms of assembly, homodimer. Mg(2+) serves as cofactor. [4Fe-4S] cluster is required as a cofactor.

Its subcellular location is the cytoplasm. It carries out the reaction cytidine(32) in tRNA + S-sulfanyl-L-cysteinyl-[cysteine desulfurase] + AH2 + ATP = 2-thiocytidine(32) in tRNA + L-cysteinyl-[cysteine desulfurase] + A + AMP + diphosphate + H(+). It participates in tRNA modification. Its function is as follows. Catalyzes the ATP-dependent 2-thiolation of cytidine in position 32 of tRNA, to form 2-thiocytidine (s(2)C32). The sulfur atoms are provided by the cysteine/cysteine desulfurase (IscS) system. This Histophilus somni (strain 2336) (Haemophilus somnus) protein is tRNA-cytidine(32) 2-sulfurtransferase.